The chain runs to 359 residues: MAP kinase-activated protein kinase 2 (359 aa).

The region spanning 20-281 (VTSNTVLGYG…IQDVISNKWI (262 aa)) is the Protein kinase domain. ATP contacts are provided by residues 26–34 (LGYGINGKV) and K49. D142 acts as the Proton acceptor in catalysis.

It belongs to the protein kinase superfamily. CAMK Ser/Thr protein kinase family. Phosphorylated and activated by MAP kinase.

The catalysed reaction is L-seryl-[protein] + ATP = O-phospho-L-seryl-[protein] + ADP + H(+). It catalyses the reaction L-threonyl-[protein] + ATP = O-phospho-L-threonyl-[protein] + ADP + H(+). In terms of biological role, its physiological substrate seems to be the small heat shock protein (HSP27/HSP25). This chain is MAP kinase-activated protein kinase 2 (MAPk-Ak2), found in Drosophila melanogaster (Fruit fly).